The following is a 578-amino-acid chain: A-type ATP synthase subunit A (578 aa).

228–235 contacts ATP; sequence GPFGSGKT.

The protein belongs to the ATPase alpha/beta chains family. In terms of assembly, has multiple subunits with at least A(3), B(3), C, D, E, F, H, I and proteolipid K(x).

The protein resides in the cell membrane. The enzyme catalyses ATP + H2O + 4 H(+)(in) = ADP + phosphate + 5 H(+)(out). Functionally, component of the A-type ATP synthase that produces ATP from ADP in the presence of a proton gradient across the membrane. The A chain is the catalytic subunit. The chain is A-type ATP synthase subunit A from Methanococcoides burtonii (strain DSM 6242 / NBRC 107633 / OCM 468 / ACE-M).